A 179-amino-acid chain; its full sequence is MTRLQEKYSKEVIPAMIEKFGYKNVMEIPKLEKIVINMGVGEAKENQKVLESAVSDLSLIAGQKPILTRAKKSVANFKIRENMALGCKVTLRKAKMYEFADKLMSIALPRVRDFRGVSAKAFDGRGNYSLGIKEQLIFPEIEYDKIDKVRGMDIIFVTTANTDEEARELLRFLGMPFAQ.

It belongs to the universal ribosomal protein uL5 family. As to quaternary structure, part of the 50S ribosomal subunit; part of the 5S rRNA/L5/L18/L25 subcomplex. Contacts the 5S rRNA and the P site tRNA. Forms a bridge to the 30S subunit in the 70S ribosome.

Functionally, this is one of the proteins that bind and probably mediate the attachment of the 5S RNA into the large ribosomal subunit, where it forms part of the central protuberance. In the 70S ribosome it contacts protein S13 of the 30S subunit (bridge B1b), connecting the 2 subunits; this bridge is implicated in subunit movement. Contacts the P site tRNA; the 5S rRNA and some of its associated proteins might help stabilize positioning of ribosome-bound tRNAs. The chain is Large ribosomal subunit protein uL5 from Clostridium botulinum (strain Alaska E43 / Type E3).